The sequence spans 282 residues: 4-hydroxy-3-methylbut-2-enyl diphosphate reductase (282 aa).

Cysteine 14 provides a ligand contact to [4Fe-4S] cluster. (2E)-4-hydroxy-3-methylbut-2-enyl diphosphate-binding residues include histidine 43 and histidine 78. Dimethylallyl diphosphate contacts are provided by histidine 43 and histidine 78. Residues histidine 43 and histidine 78 each coordinate isopentenyl diphosphate. Residue cysteine 100 coordinates [4Fe-4S] cluster. Histidine 128 contacts (2E)-4-hydroxy-3-methylbut-2-enyl diphosphate. Residue histidine 128 participates in dimethylallyl diphosphate binding. Histidine 128 lines the isopentenyl diphosphate pocket. Glutamate 130 acts as the Proton donor in catalysis. Threonine 164 lines the (2E)-4-hydroxy-3-methylbut-2-enyl diphosphate pocket. Cysteine 192 provides a ligand contact to [4Fe-4S] cluster. 4 residues coordinate (2E)-4-hydroxy-3-methylbut-2-enyl diphosphate: serine 220, serine 221, asparagine 222, and serine 266. Serine 220, serine 221, asparagine 222, and serine 266 together coordinate dimethylallyl diphosphate. Residues serine 220, serine 221, asparagine 222, and serine 266 each coordinate isopentenyl diphosphate.

This sequence belongs to the IspH family. Requires [4Fe-4S] cluster as cofactor.

The enzyme catalyses isopentenyl diphosphate + 2 oxidized [2Fe-2S]-[ferredoxin] + H2O = (2E)-4-hydroxy-3-methylbut-2-enyl diphosphate + 2 reduced [2Fe-2S]-[ferredoxin] + 2 H(+). It catalyses the reaction dimethylallyl diphosphate + 2 oxidized [2Fe-2S]-[ferredoxin] + H2O = (2E)-4-hydroxy-3-methylbut-2-enyl diphosphate + 2 reduced [2Fe-2S]-[ferredoxin] + 2 H(+). It participates in isoprenoid biosynthesis; dimethylallyl diphosphate biosynthesis; dimethylallyl diphosphate from (2E)-4-hydroxy-3-methylbutenyl diphosphate: step 1/1. It functions in the pathway isoprenoid biosynthesis; isopentenyl diphosphate biosynthesis via DXP pathway; isopentenyl diphosphate from 1-deoxy-D-xylulose 5-phosphate: step 6/6. In terms of biological role, catalyzes the conversion of 1-hydroxy-2-methyl-2-(E)-butenyl 4-diphosphate (HMBPP) into a mixture of isopentenyl diphosphate (IPP) and dimethylallyl diphosphate (DMAPP). Acts in the terminal step of the DOXP/MEP pathway for isoprenoid precursor biosynthesis. This chain is 4-hydroxy-3-methylbut-2-enyl diphosphate reductase, found in Clostridium perfringens (strain 13 / Type A).